The sequence spans 273 residues: MKKFSLVAATLIAGVVLNVNAATVATVNGKSISDTEVSEFFAPMLRGQDFKTLPDNQKKALIQQYIMQDLILQDAKKQNLEKDPLYTKELDRAKDAILVNVYQEKILNTIKIDAAKVKAFYDQNKDKYVKPARVQAKHILVATEKEAKDIINELKGLKGKELDAKFSELAKEKSIDPGSKNQGGELGWFDQSTMVKPFTDAAFALKNGTITTTPVKTNFGYHVILKENSQAKGQIKFDEVKQGIENGLKFEEFKKVINQKGQDLLNSAKVEYK.

Residues 1–21 (MKKFSLVAATLIAGVVLNVNA) form the signal peptide. One can recognise a PpiC domain in the interval 131 to 228 (PARVQAKHIL…FGYHVILKEN (98 aa)).

The enzyme catalyses [protein]-peptidylproline (omega=180) = [protein]-peptidylproline (omega=0). The polypeptide is Putative peptidyl-prolyl cis-trans isomerase Cbf2 (cbf2) (Campylobacter jejuni subsp. jejuni serotype O:2 (strain ATCC 700819 / NCTC 11168)).